The following is a 235-amino-acid chain: Protein CIST1 (235 aa).

The signal sequence occupies residues 1 to 31 (MASSQPPLPPPPPPLLLLALLLLLKVSDTSS). 2 stretches are compositionally biased toward low complexity: residues 28–61 (DTSS…SSPT) and 76–110 (STSH…SQPE). The interval 28–159 (DTSSSVSTAT…TGPPSVSLAT (132 aa)) is disordered. At 32-184 (SVSTATSTAS…GVPRLHRNPG (153 aa)) the chain is on the extracellular side. Residue Asn-45 is glycosylated (N-linked (GlcNAc...) asparagine). Over residues 114-136 (HPSSGSPSSEHTVTSPSLGSVSL) the composition is skewed to polar residues. Residues 185–205 (VVVAVCLLVSALLIGGAIMAV) traverse the membrane as a helical segment. Residues 206 to 235 (RRCHNGVSEFQKLDEGLVSRRSSSAHHTLP) lie on the Cytoplasmic side of the membrane.

Highly expressed in large intestine, small intestine, rumen, and kidney tissues.

It is found in the membrane. In Bos taurus (Bovine), this protein is Protein CIST1 (CIST1).